Here is a 945-residue protein sequence, read N- to C-terminus: Bifunctional glutamine synthetase adenylyltransferase/adenylyl-removing enzyme (945 aa).

The segment at 1-441 (MLPLSAALQT…VFNDLIGDDS (441 aa)) is adenylyl removase. The tract at residues 450–945 (YQHYHSLWQD…VRASWAKWLG (496 aa)) is adenylyl transferase.

The protein belongs to the GlnE family. It depends on Mg(2+) as a cofactor.

It carries out the reaction [glutamine synthetase]-O(4)-(5'-adenylyl)-L-tyrosine + phosphate = [glutamine synthetase]-L-tyrosine + ADP. The catalysed reaction is [glutamine synthetase]-L-tyrosine + ATP = [glutamine synthetase]-O(4)-(5'-adenylyl)-L-tyrosine + diphosphate. Involved in the regulation of glutamine synthetase GlnA, a key enzyme in the process to assimilate ammonia. When cellular nitrogen levels are high, the C-terminal adenylyl transferase (AT) inactivates GlnA by covalent transfer of an adenylyl group from ATP to specific tyrosine residue of GlnA, thus reducing its activity. Conversely, when nitrogen levels are low, the N-terminal adenylyl removase (AR) activates GlnA by removing the adenylyl group by phosphorolysis, increasing its activity. The regulatory region of GlnE binds the signal transduction protein PII (GlnB) which indicates the nitrogen status of the cell. This chain is Bifunctional glutamine synthetase adenylyltransferase/adenylyl-removing enzyme, found in Serratia proteamaculans (strain 568).